We begin with the raw amino-acid sequence, 170 residues long: Microfibrillar-associated protein 5 (170 aa).

An N-terminal signal peptide occupies residues 1–20 (MTFFGPKVLLLLTALIMSSG). The Cell attachment site motif lies at 30–32 (RGD). Residue asparagine 76 is glycosylated (N-linked (GlcNAc...) asparagine).

Belongs to the MFAP family. In terms of assembly, interacts with TGFB2. Interacts with BMP2. Interacts with FBN1 (via N-terminal domain) and FBN2. Post-translationally, forms intermolecular disulfide bonds either with other MAGP-2 molecules or with other components of the microfibrils. In terms of tissue distribution, associated with fibrillin-containing microfibrils of the developing nuchal ligament.

It localises to the secreted. The protein resides in the extracellular space. Its subcellular location is the extracellular matrix. Its function is as follows. May play a role in hematopoiesis. In the cardiovascular system, could regulate growth factors or participate in cell signaling in maintaining large vessel integrity. Component of the elastin-associated microfibrils. In Bos taurus (Bovine), this protein is Microfibrillar-associated protein 5 (MFAP5).